The chain runs to 105 residues: Small ribosomal subunit protein uS10 (105 aa).

This sequence belongs to the universal ribosomal protein uS10 family. Part of the 30S ribosomal subunit.

In terms of biological role, involved in the binding of tRNA to the ribosomes. This is Small ribosomal subunit protein uS10 from Legionella pneumophila (strain Paris).